The sequence spans 810 residues: LPS-assembly protein LptD (810 aa).

The N-terminal stretch at Met-1 to Ala-29 is a signal peptide.

This sequence belongs to the LptD family. In terms of assembly, component of the lipopolysaccharide transport and assembly complex. Interacts with LptE and LptA.

It localises to the cell outer membrane. In terms of biological role, together with LptE, is involved in the assembly of lipopolysaccharide (LPS) at the surface of the outer membrane. The sequence is that of LPS-assembly protein LptD from Aeromonas salmonicida (strain A449).